The sequence spans 290 residues: MNELIIATRKSKLAQVQTEIIMGKLKSKFNIDSKKLLIVTEGDRKLDVSLNKIGGKGLFVKDIELALLNKEAHAAVHSMKDVPFEVSSEFEITAITGREDIRDVFISNGDISFKDIKKGAKVGTSSIRRAAQLKLLRSDLEIVPIRGNVQTRLKKMEEQNLDGIVLAAAGLKRLGDENLITDYFDPKEFLPAVSQGALGIECLKDGDANKYFEALIDAEATLTVEAERSFMKELQGDCHSLIGAYSEIQGDDLYMIGIYDIGGKIVKKDILGCKTNNIELGKKLAQKILG.

S-(dipyrrolylmethanemethyl)cysteine is present on C238.

It belongs to the HMBS family. In terms of assembly, monomer. The cofactor is dipyrromethane.

The enzyme catalyses 4 porphobilinogen + H2O = hydroxymethylbilane + 4 NH4(+). Its pathway is porphyrin-containing compound metabolism; protoporphyrin-IX biosynthesis; coproporphyrinogen-III from 5-aminolevulinate: step 2/4. Tetrapolymerization of the monopyrrole PBG into the hydroxymethylbilane pre-uroporphyrinogen in several discrete steps. The polypeptide is Porphobilinogen deaminase (Clostridium botulinum (strain Eklund 17B / Type B)).